The primary structure comprises 105 residues: MMGGNMSKMMKQVQKMQQDMLRLQEELGNRTVESTAGGGAVKVVANGRNEIVSIEIKPEALDPEDVEMLQDMILAAVNEALKKAQDMISQEMGRLTGNLKIPGLF.

Belongs to the YbaB/EbfC family. Homodimer.

It is found in the cytoplasm. Its subcellular location is the nucleoid. Binds to DNA and alters its conformation. May be involved in regulation of gene expression, nucleoid organization and DNA protection. This Pelotomaculum thermopropionicum (strain DSM 13744 / JCM 10971 / SI) protein is Nucleoid-associated protein PTH_0052.